The primary structure comprises 90 residues: MEQAIAPPLPIRDYQYQTPSIPGSSDYAWRTFVFVTFGLLIAVGVAWLAYTLFLKDLILVCKAKKQRRTEEIGYGNTPARLNGDQQGLPR.

The helical transmembrane segment at 32–52 (FVFVTFGLLIAVGVAWLAYTL) threads the bilayer.

This sequence belongs to the mastrevirus movement protein family. As to quaternary structure, interacts with the capsid protein (CP). Part of a MP-CP-viral DNA complex.

It localises to the host membrane. Involved in the viral transport within, and between cells. The protein is Movement protein of Wheat dwarf virus (isolate Sweden) (WDV).